Consider the following 141-residue polypeptide: Auxin-responsive protein SAUR63 (141 aa).

This sequence belongs to the ARG7 family. In terms of tissue distribution, expressed in hypocotyls, cotyledons, petioles, young rosette leaves, apical portion of inflorescence stems, stamen filaments and petals.

It localises to the cell membrane. Functionally, may promote auxin-stimulated organ elongation, such as hypocotyls, stamen filaments and petals. This chain is Auxin-responsive protein SAUR63, found in Arabidopsis thaliana (Mouse-ear cress).